A 466-amino-acid polypeptide reads, in one-letter code: Magnetosome-associated protein MamJ (466 aa).

2 disordered regions span residues 1–23 and 60–80; these read MAKNRRDRGTDLPGDGDQKISTG and ANQGGLVETAQPPSAPIRSQD. The not required to restore magnetic response to deletion mutant stretch occupies residues 1 to 24; it reads MAKNRRDRGTDLPGDGDQKISTGP. The segment at 25–80 is required to restore magnetic response to deletion mutant; sequence EIVSVTVHPSPNLAAAAKPVQGDIWASLLESSPWSANQGGLVETAQPPSAPIRSQD. Tandem repeat unit repeat units follow at residues 81–168 and 169–256; these read PVPV…VEPE and PAPV…VEPE. Not required to restore magnetic response to deletion mutant stretches follow at residues 81-256, 136-334, 333-374, and 432-466; these read PVPV…VEPE, ETDA…SQAE, AESV…AVEA, and VGSNVVAGTRRLAQTIEVSCGSCSSPKCDAEDKNK. Glu-Pro-rich motif repeat units follow at residues 145–164, 233–252, and 253–272; these read IEPEPALVEPVIEIEAEAAE and VEPEPAPVEPVIEIEAEAAE. Required to restore magnetic response to deletion mutant regions lie at residues 375-432 and 426-466; these read TRQP…GRLV and VKGG…DKNK.

This sequence belongs to the magnetosome MamJ protein family. In terms of assembly, forms homooligomers. Interacts with MamK. Post-translationally, identified by N-terminal sequencing of a protein that is about 96 kDa in size. The protein runs anomalously on protein gels.

The protein resides in the magnetosome. Required for assembly of magnetosome chains. Regulates the dynamic behavior of MamK filaments. May connect magnetosomes to MamK filaments. Moves from the cell poles towards midcell; movement does not depend on the treadmilling ability of MamK, suggesting MamJ associates and disassociates continuously from the MamK filament. In Magnetospirillum gryphiswaldense (strain DSM 6361 / JCM 21280 / NBRC 15271 / MSR-1), this protein is Magnetosome-associated protein MamJ.